Here is a 589-residue protein sequence, read N- to C-terminus: Aspartate--tRNA(Asp/Asn) ligase (589 aa).

An L-aspartate-binding site is contributed by E176. The segment at Q200–K203 is aspartate. An L-aspartate-binding site is contributed by R222. Residues R222 to E224 and Q231 each bind ATP. H450 provides a ligand contact to L-aspartate. Residue E484 coordinates ATP. Residue R491 participates in L-aspartate binding. G536 to R539 lines the ATP pocket.

It belongs to the class-II aminoacyl-tRNA synthetase family. Type 1 subfamily. In terms of assembly, homodimer.

The protein localises to the cytoplasm. The enzyme catalyses tRNA(Asx) + L-aspartate + ATP = L-aspartyl-tRNA(Asx) + AMP + diphosphate. Its function is as follows. Aspartyl-tRNA synthetase with relaxed tRNA specificity since it is able to aspartylate not only its cognate tRNA(Asp) but also tRNA(Asn). Reaction proceeds in two steps: L-aspartate is first activated by ATP to form Asp-AMP and then transferred to the acceptor end of tRNA(Asp/Asn). This Bacillus cytotoxicus (strain DSM 22905 / CIP 110041 / 391-98 / NVH 391-98) protein is Aspartate--tRNA(Asp/Asn) ligase.